The following is a 367-amino-acid chain: Phosphoribosylaminoimidazole-succinocarboxamide synthase (367 aa).

Belongs to the SAICAR synthetase family.

It catalyses the reaction 5-amino-1-(5-phospho-D-ribosyl)imidazole-4-carboxylate + L-aspartate + ATP = (2S)-2-[5-amino-1-(5-phospho-beta-D-ribosyl)imidazole-4-carboxamido]succinate + ADP + phosphate + 2 H(+). It functions in the pathway purine metabolism; IMP biosynthesis via de novo pathway; 5-amino-1-(5-phospho-D-ribosyl)imidazole-4-carboxamide from 5-amino-1-(5-phospho-D-ribosyl)imidazole-4-carboxylate: step 1/2. This chain is Phosphoribosylaminoimidazole-succinocarboxamide synthase, found in Shewanella frigidimarina (strain NCIMB 400).